Here is a 350-residue protein sequence, read N- to C-terminus: Twinfilin-1 (350 aa).

ADF-H domains follow at residues 4-139 (QTGI…KYLA) and 177-313 (GIAF…EEVH). Residues 316–350 (QHAHKQNFAKPKGPAGKRGIRRLIRGPAEAETAND) form a disordered region.

Belongs to the actin-binding proteins ADF family. Twinfilin subfamily. As to quaternary structure, interacts with G-actin; ADP-actin form.

It is found in the cytoplasm. It localises to the cytoskeleton. Functionally, actin-binding protein involved in motile and morphological processes. Inhibits actin polymerization, likely by sequestering G-actin. In Xenopus tropicalis (Western clawed frog), this protein is Twinfilin-1 (twf1).